We begin with the raw amino-acid sequence, 306 residues long: Ribosomal protein L11 methyltransferase (306 aa).

Residues Thr-152, Gly-179, Asp-201, and Asn-243 each contribute to the S-adenosyl-L-methionine site.

Belongs to the methyltransferase superfamily. PrmA family.

Its subcellular location is the cytoplasm. It catalyses the reaction L-lysyl-[protein] + 3 S-adenosyl-L-methionine = N(6),N(6),N(6)-trimethyl-L-lysyl-[protein] + 3 S-adenosyl-L-homocysteine + 3 H(+). In terms of biological role, methylates ribosomal protein L11. The polypeptide is Ribosomal protein L11 methyltransferase (Citrifermentans bemidjiense (strain ATCC BAA-1014 / DSM 16622 / JCM 12645 / Bem) (Geobacter bemidjiensis)).